Consider the following 372-residue polypeptide: Spermidine/putrescine import ATP-binding protein PotA (372 aa).

Positions 13–243 (IKLTGISKSF…PKNLFVARFI (231 aa)) constitute an ABC transporter domain. ATP is bound at residue 45–52 (GPSGCGKT).

This sequence belongs to the ABC transporter superfamily. Spermidine/putrescine importer (TC 3.A.1.11.1) family. As to quaternary structure, the complex is composed of two ATP-binding proteins (PotA), two transmembrane proteins (PotB and PotC) and a solute-binding protein (PotD).

The protein resides in the cell inner membrane. It carries out the reaction ATP + H2O + polyamine-[polyamine-binding protein]Side 1 = ADP + phosphate + polyamineSide 2 + [polyamine-binding protein]Side 1.. In terms of biological role, part of the ABC transporter complex PotABCD involved in spermidine/putrescine import. Responsible for energy coupling to the transport system. This chain is Spermidine/putrescine import ATP-binding protein PotA, found in Aliivibrio fischeri (strain ATCC 700601 / ES114) (Vibrio fischeri).